A 126-amino-acid chain; its full sequence is Large ribosomal subunit protein uL22 (126 aa).

It belongs to the universal ribosomal protein uL22 family. As to quaternary structure, part of the 50S ribosomal subunit.

This protein binds specifically to 23S rRNA; its binding is stimulated by other ribosomal proteins, e.g. L4, L17, and L20. It is important during the early stages of 50S assembly. It makes multiple contacts with different domains of the 23S rRNA in the assembled 50S subunit and ribosome. In terms of biological role, the globular domain of the protein is located near the polypeptide exit tunnel on the outside of the subunit, while an extended beta-hairpin is found that lines the wall of the exit tunnel in the center of the 70S ribosome. This chain is Large ribosomal subunit protein uL22, found in Paracoccus denitrificans (strain Pd 1222).